The sequence spans 270 residues: High choriolytic enzyme 1 (270 aa).

The signal sequence occupies residues 1-20 (MNLAPSTCLLLLFLLDIAQA). Positions 21-70 (LPVWDEEGHEEGHEEGDGDDFVDITTRILTSNNNTDQLLLEGDLVAPTNR) are cleaved as a propeptide — activation peptide. N-linked (GlcNAc...) asparagine glycosylation is present at asparagine 53. One can recognise a Peptidase M12A domain in the interval 71 to 270 (NAMKCWSSSC…TRINVLYNCR (200 aa)). Intrachain disulfides connect cysteine 75–cysteine 80, cysteine 120–cysteine 269, and cysteine 141–cysteine 161. Histidine 169 is a binding site for Zn(2+). Residue glutamate 170 is part of the active site. The Zn(2+) site is built by histidine 173 and histidine 179.

The cofactor is Zn(2+).

It is found in the zymogen granule. The catalysed reaction is Hydrolysis of the inner layer of fish egg envelope. Also hydrolysis of casein and small molecule substrates such as succinyl-Leu-Leu-Val-Tyr-|-7-(4-methyl)coumarylamide.. Functionally, participates in the breakdown of the egg envelope, which is derived from the egg extracellular matrix, at the time of hatching. Thus allowing the newly hatched fish to swim free. HCE binds tightly to the egg envelope while it exerts the choriolytic swelling action. In Oryzias latipes (Japanese rice fish), this protein is High choriolytic enzyme 1 (hcea).